A 299-amino-acid polypeptide reads, in one-letter code: Bifunctional protein FolD (299 aa).

NADP(+)-binding positions include 169–171 (GRS), S194, and I235.

It belongs to the tetrahydrofolate dehydrogenase/cyclohydrolase family. In terms of assembly, homodimer.

It catalyses the reaction (6R)-5,10-methylene-5,6,7,8-tetrahydrofolate + NADP(+) = (6R)-5,10-methenyltetrahydrofolate + NADPH. The enzyme catalyses (6R)-5,10-methenyltetrahydrofolate + H2O = (6R)-10-formyltetrahydrofolate + H(+). The protein operates within one-carbon metabolism; tetrahydrofolate interconversion. Its function is as follows. Catalyzes the oxidation of 5,10-methylenetetrahydrofolate to 5,10-methenyltetrahydrofolate and then the hydrolysis of 5,10-methenyltetrahydrofolate to 10-formyltetrahydrofolate. The chain is Bifunctional protein FolD from Trichormus variabilis (strain ATCC 29413 / PCC 7937) (Anabaena variabilis).